We begin with the raw amino-acid sequence, 157 residues long: Deoxyuridine 5'-triphosphate nucleotidohydrolase (157 aa).

The dUMP site is built by Ser63, Gly76, Asp79, Tyr82, Lys87, Arg132, Phe137, and Gly138. The disordered stretch occupies residues 125–157 (NDLESTERGAGGFGSTGINDEKKRKLDEAEAKE). Over residues 143–157 (NDEKKRKLDEAEAKE) the composition is skewed to basic and acidic residues.

This sequence belongs to the dUTPase family. In terms of assembly, homotrimer. Requires Mg(2+) as cofactor.

It catalyses the reaction dUTP + H2O = dUMP + diphosphate + H(+). Its pathway is pyrimidine metabolism; dUMP biosynthesis; dUMP from dCTP (dUTP route): step 2/2. Functionally, involved in nucleotide metabolism via production of dUMP, the immediate precursor of thymidine nucleotides, and decreases the intracellular concentration of dUTP so that uracil cannot be incorporated into DNA. The polypeptide is Deoxyuridine 5'-triphosphate nucleotidohydrolase (DUT1) (Yarrowia lipolytica (strain CLIB 122 / E 150) (Yeast)).